We begin with the raw amino-acid sequence, 92 residues long: Elongation factor 1-beta (92 aa).

It belongs to the EF-1-beta/EF-1-delta family.

In terms of biological role, promotes the exchange of GDP for GTP in EF-1-alpha/GDP, thus allowing the regeneration of EF-1-alpha/GTP that could then be used to form the ternary complex EF-1-alpha/GTP/AAtRNA. The protein is Elongation factor 1-beta of Korarchaeum cryptofilum (strain OPF8).